We begin with the raw amino-acid sequence, 275 residues long: 4-diphosphocytidyl-2-C-methyl-D-erythritol kinase (275 aa).

Lysine 14 is an active-site residue. Position 98 to 108 (98 to 108) interacts with ATP; the sequence is PMGAGLGGGSS. Aspartate 140 is a catalytic residue.

This sequence belongs to the GHMP kinase family. IspE subfamily.

The catalysed reaction is 4-CDP-2-C-methyl-D-erythritol + ATP = 4-CDP-2-C-methyl-D-erythritol 2-phosphate + ADP + H(+). It functions in the pathway isoprenoid biosynthesis; isopentenyl diphosphate biosynthesis via DXP pathway; isopentenyl diphosphate from 1-deoxy-D-xylulose 5-phosphate: step 3/6. Its function is as follows. Catalyzes the phosphorylation of the position 2 hydroxy group of 4-diphosphocytidyl-2C-methyl-D-erythritol. In Francisella tularensis subsp. tularensis (strain FSC 198), this protein is 4-diphosphocytidyl-2-C-methyl-D-erythritol kinase.